A 284-amino-acid chain; its full sequence is Tropomyosin alpha-1 chain (284 aa).

The tract at residues 1 to 38 is disordered; the sequence is MDAIKKKMQMLKLDKENALDRAEQAEADKKAAEERSKQ. Positions 1–284 form a coiled coil; sequence MDAIKKKMQM…DHALNDMTSI (284 aa). Over residues 12 to 38 the composition is skewed to basic and acidic residues; it reads KLDKENALDRAEQAEADKKAAEERSKQ.

Belongs to the tropomyosin family. Homodimer. Heterodimer of an alpha (TPM1, TPM3 or TPM4) and a beta (TPM2) chain. Interacts with HRG (via the HRR domain); the interaction contributes to the antiangiogenic properties of the histidine/proline-rich region (HRR) of HRG.

It localises to the cytoplasm. It is found in the cytoskeleton. Functionally, binds to actin filaments in muscle and non-muscle cells. Plays a central role, in association with the troponin complex, in the calcium dependent regulation of vertebrate striated muscle contraction. Smooth muscle contraction is regulated by interaction with caldesmon. In non-muscle cells is implicated in stabilizing cytoskeleton actin filaments. The polypeptide is Tropomyosin alpha-1 chain (TPM1) (Coturnix japonica (Japanese quail)).